The sequence spans 1544 residues: Lysine-specific demethylase 5B (1544 aa).

The span at 1-14 (MEPATTLPPGPRPA) shows a compositional bias: pro residues. The interval 1-22 (MEPATTLPPGPRPALPLGGPGP) is disordered. One can recognise a JmjN domain in the interval 32-73 (CPVFEPSWEEFADPFAFIHKIRPIAEQTGICKVRPPPDWQPP). The ARID domain occupies 97-187 (TRVKLNFLDQ…ILNPYNLFLS (91 aa)). Residues Lys-148, Lys-204, Lys-209, Lys-242, Lys-274, and Lys-278 each participate in a glycyl lysine isopeptide (Lys-Gly) (interchain with G-Cter in SUMO2) cross-link. Residues 200-228 (TSDTKDKEYKPHDIPQRQSVQPAETCPPA) form a disordered region. Positions 202–214 (DTKDKEYKPHDIP) are enriched in basic and acidic residues. The disordered stretch occupies residues 269–297 (NEKEMKSTIKQEPTEKKDCELESEKEKPK). The segment at 309-359 (LYVCLLCGSGNDEDRLLLCDGCDDSYHTFCLVPPLHDVPKGDWRCPKCLAQ) adopts a PHD-type 1 zinc-finger fold. Tyr-425 provides a ligand contact to 2-oxoglutarate. Positions 453–619 (EYLDSGWNLN…LGRQCVEHYR (167 aa)) constitute a JmjC domain. His-499 and Glu-501 together coordinate Fe cation. The 2-oxoglutarate site is built by Ser-507, Asn-509, and Lys-517. His-587 lines the Fe cation pocket. The C5HC2 zinc finger occupies 692 to 744 (CIKCKTTCFMSAISCSCKPGLLVCLHHVKELCSCPPYKYNLRYRYTLDDLYPM). A Glycyl lysine isopeptide (Lys-Gly) (interchain with G-Cter in SUMO2) cross-link involves residue Lys-769. At Lys-832 the chain carries N6-acetyllysine. Ser-986 carries the post-translational modification Phosphoserine. Residues 1176–1224 (MKVCLCQKTPATPMIQCELCRDAFHTSCVAAPSISQSSRIWLCPHCRRS) form a PHD-type 2 zinc finger. Residues 1297 to 1314 (QASATDKVSQPPGTTSFS) are compositionally biased toward polar residues. The disordered stretch occupies residues 1297–1318 (QASATDKVSQPPGTTSFSLPDD). The residue at position 1328 (Ser-1328) is a Phosphoserine. The segment covering 1374–1388 (PSSVQQADRSSPVRS) has biased composition (polar residues). The disordered stretch occupies residues 1374–1447 (PSSVQQADRS…IKLSHPKDMD (74 aa)). A compositionally biased stretch (basic and acidic residues) spans 1389-1427 (SSEKNDCLRGKRDAINSPERKLKRRPEREGLPSERWDRV). Positions 1428-1441 (KHMRTPQKKKIKLS) are enriched in basic residues. Lys-1450 participates in a covalent cross-link: Glycyl lysine isopeptide (Lys-Gly) (interchain with G-Cter in SUMO2). Ser-1456 is modified (phosphoserine). The PHD-type 3 zinc finger occupies 1484-1538 (DAICPAVSCLQPEGDEVDWVQCDGSCNQWFHQVCVGVSPEMAEKEDYICVRCTGK).

It belongs to the JARID1 histone demethylase family. As to quaternary structure, interacts with FOXG1B, PAX9, MYC, MYCN and RB1. Interacts with HDAC1, HDAC4, HDAC5 and HDAC7. Interacts (via PHD-type 1 zinc finger) with histone H3 unmodified at 'Lys-4'; the interaction is inhibited when histone H3 is methylated at 'Arg-2' or 'Lys-4'. The cofactor is Fe(2+). Present at highest levels in testis, where it is enriched in spermatogonia and pachytene cells (at protein level).

Its subcellular location is the nucleus. It catalyses the reaction N(6),N(6),N(6)-trimethyl-L-lysyl(4)-[histone H3] + 3 2-oxoglutarate + 3 O2 = L-lysyl(4)-[histone H3] + 3 formaldehyde + 3 succinate + 3 CO2. Functionally, histone demethylase that demethylates 'Lys-4' of histone H3, thereby playing a central role in histone code. Does not demethylate histone H3 'Lys-9' or H3 'Lys-27'. Demethylates trimethylated, dimethylated and monomethylated H3 'Lys-4'. Acts as a transcriptional corepressor for FOXG1B and PAX9. Represses the CLOCK-BMAL1 heterodimer-mediated transcriptional activation of the core clock component PER2. The protein is Lysine-specific demethylase 5B (Kdm5b) of Mus musculus (Mouse).